Here is a 414-residue protein sequence, read N- to C-terminus: MVDHLKRQDEKVFAAIEAELGRQRSKIELIASENFVSEAVMEAQGSVLTNKYAEGYPGKRYYGGCEHVDVVEDIARDRVKEIFGAEHVNVQPHSGAQANMAVYFTILEQGDTVLGMNLSHGGHLTHGSPVNFSGVQYNFVEYGVDAESHRINYDDVLAKAKEHKPKLIVAGASAYPRVIDFKRFREIADEVGAYLMVDMAHIAGLVAAGLHPNPVPHAHFVTTTTHKTLRGPRGGMILCEEQFAKQIDKSIFPGIQGGPLMHVIAAKAVAFGEALQDDFKTYAQNIINNANRLAEGLQKEGLTLVSGGTDNHLILIDVRNLEITGKVAEHVLDEVGITVNKNTIPFETASPFVTSGVRIGTAAVTSRGFGLEEMDEIASLIAYTLKNHENEAALEEARKRVEALTSKFPMYTDL.

(6S)-5,6,7,8-tetrahydrofolate contacts are provided by residues Leu-118 and 122–124 (GHL). Lys-227 is modified (N6-(pyridoxal phosphate)lysine). (6S)-5,6,7,8-tetrahydrofolate-binding positions include Glu-240 and 350–352 (SPF).

Belongs to the SHMT family. In terms of assembly, homodimer. The cofactor is pyridoxal 5'-phosphate.

It is found in the cytoplasm. The catalysed reaction is (6R)-5,10-methylene-5,6,7,8-tetrahydrofolate + glycine + H2O = (6S)-5,6,7,8-tetrahydrofolate + L-serine. Its pathway is one-carbon metabolism; tetrahydrofolate interconversion. The protein operates within amino-acid biosynthesis; glycine biosynthesis; glycine from L-serine: step 1/1. Its function is as follows. Catalyzes the reversible interconversion of serine and glycine with tetrahydrofolate (THF) serving as the one-carbon carrier. This reaction serves as the major source of one-carbon groups required for the biosynthesis of purines, thymidylate, methionine, and other important biomolecules. Also exhibits THF-independent aldolase activity toward beta-hydroxyamino acids, producing glycine and aldehydes, via a retro-aldol mechanism. This chain is Serine hydroxymethyltransferase, found in Bacillus cereus (strain ZK / E33L).